The chain runs to 336 residues: Iron-uptake system permease protein FeuC (336 aa).

Helical transmembrane passes span 7–27 (LFIA…SFSV), 57–77 (VVMA…IQAI), 85–105 (PGIL…MLLF), 120–140 (MPLF…IFAW), 150–170 (IILV…FLSL), 191–211 (ANWT…PILI), 246–266 (VAII…GLIA), 280–300 (YILP…DFAG), and 308–328 (EVPA…YLLF).

The protein belongs to the binding-protein-dependent transport system permease family. FecCD subfamily. In terms of assembly, the complex is composed of one ATP-binding protein (YusV), two transmembrane proteins (FeuB and FeuC) and a solute-binding protein (FeuA).

It localises to the cell membrane. Involved in the uptake of iron. Probably responsible for the translocation of the substrate across the membrane. Functionally, part of the ABC transporter complex FeuABC/YusV involved in import of the catecholate siderophores bacillibactin and enterobactin. This Bacillus subtilis (strain 168) protein is Iron-uptake system permease protein FeuC (feuC).